A 28-amino-acid chain; its full sequence is Cyclotide vodo I3 (28 aa).

Intrachain disulfides connect cysteine 4-cysteine 18, cysteine 8-cysteine 20, and cysteine 13-cysteine 25.

This is a cyclic peptide. Post-translationally, contains 3 disulfide bonds.

In terms of biological role, probably participates in a plant defense mechanism. This is Cyclotide vodo I3 from Viola odorata (Sweet violet).